The chain runs to 505 residues: 2,3-bisphosphoglycerate-independent phosphoglycerate mutase (505 aa).

Positions 11 and 61 each coordinate Mn(2+). S61 (phosphoserine intermediate) is an active-site residue. Substrate contacts are provided by residues H122, 152–153 (RD), R184, R190, 258–261 (RPDR), and K331. D396, H400, D437, H438, and H455 together coordinate Mn(2+).

The protein belongs to the BPG-independent phosphoglycerate mutase family. Monomer. It depends on Mn(2+) as a cofactor.

The catalysed reaction is (2R)-2-phosphoglycerate = (2R)-3-phosphoglycerate. It participates in carbohydrate degradation; glycolysis; pyruvate from D-glyceraldehyde 3-phosphate: step 3/5. Its function is as follows. Catalyzes the interconversion of 2-phosphoglycerate and 3-phosphoglycerate. The chain is 2,3-bisphosphoglycerate-independent phosphoglycerate mutase from Mesomycoplasma hyopneumoniae (strain J / ATCC 25934 / NCTC 10110) (Mycoplasma hyopneumoniae).